The primary structure comprises 456 residues: Probable hexose phosphate transport protein (456 aa).

Helical transmembrane passes span 34–54 (IFYS…SFTF), 70–90 (LGII…VSGV), 113–133 (IFFG…INGW), 161–181 (VWST…GVAI), 185–205 (GWRG…FILI), 257–277 (YVLS…IYVV), 302–322 (LCVS…GWLS), 331–351 (GPMN…LWGT), 363–383 (FLFI…LAAA), 394–414 (ASGF…YPLG), and 421–441 (GWHG…ILFL).

The protein belongs to the major facilitator superfamily. Organophosphate:Pi antiporter (OPA) (TC 2.A.1.4) family.

The protein localises to the cell membrane. Its function is as follows. Transport protein for sugar phosphate uptake. This chain is Probable hexose phosphate transport protein, found in Chlamydia trachomatis serovar D (strain ATCC VR-885 / DSM 19411 / UW-3/Cx).